The sequence spans 1838 residues: Nuclear pore complex protein NUP205 (1838 aa).

This sequence belongs to the NUP186/NUP192/NUP205 family. As to quaternary structure, part of the nuclear pore complex (NPC). The NPC has an eight-fold symmetrical structure comprising a central transport channel and two rings, the cytoplasmic and nuclear rings, to which eight filaments are attached. The cytoplasmic filaments have loose ends, while the nuclear filaments are joined in a distal ring, forming a nuclear basket. NPCs are highly dynamic in configuration and composition, and can be devided in 3 subcomplexes, the NUP62 subcomplex, the NUP107-160 subcomplex and the NUP93 subcomplex, containing approximately 30 different nucleoporin proteins.

Its subcellular location is the nucleus envelope. It is found in the nucleus. The protein localises to the nuclear pore complex. The chain is Nuclear pore complex protein NUP205 from Arabidopsis thaliana (Mouse-ear cress).